A 454-amino-acid polypeptide reads, in one-letter code: SH2 domain-containing protein 4A (454 aa).

Disordered regions lie at residues 45–65 (AMERKESLPVKPRPKKENGKS), 107–131 (EQEAEEPRKTHSEEFTNSLKTKSQY), 152–177 (KEELEQGSRPAPTLEEEKIRSLSSSS), and 237–302 (RKSK…AYPQ). The segment covering 107–120 (EQEAEEPRKTHSEE) has biased composition (basic and acidic residues). Phosphoserine occurs at positions 118 and 124. Over residues 240–259 (KAADEKRRSLAKQAREDYKR) the composition is skewed to basic and acidic residues. Ser-261 and Ser-315 each carry phosphoserine. The 94-residue stretch at 347-440 (WFHGILTLKK…LGKELLLYPC (94 aa)) folds into the SH2 domain.

As to quaternary structure, interacts with ESR1. As to expression, ubiquitously expressed. Aberrantly expressed in some cancers.

Its subcellular location is the cytoplasm. Its function is as follows. Inhibits estrogen-induced cell proliferation by competing with PLCG for binding to ESR1, blocking the effect of estrogen on PLCG and repressing estrogen-induced proliferation. May play a role in T-cell development and function. In Homo sapiens (Human), this protein is SH2 domain-containing protein 4A (SH2D4A).